The sequence spans 147 residues: Large ribosomal subunit protein bL9 (147 aa).

Belongs to the bacterial ribosomal protein bL9 family.

In terms of biological role, binds to the 23S rRNA. In Campylobacter jejuni subsp. jejuni serotype O:2 (strain ATCC 700819 / NCTC 11168), this protein is Large ribosomal subunit protein bL9.